We begin with the raw amino-acid sequence, 134 residues long: Small ribosomal subunit protein uS11 (134 aa).

This sequence belongs to the universal ribosomal protein uS11 family. In terms of assembly, part of the 30S ribosomal subunit. Interacts with proteins S7 and S18. Binds to IF-3.

Functionally, located on the platform of the 30S subunit, it bridges several disparate RNA helices of the 16S rRNA. Forms part of the Shine-Dalgarno cleft in the 70S ribosome. This Herminiimonas arsenicoxydans protein is Small ribosomal subunit protein uS11.